We begin with the raw amino-acid sequence, 115 residues long: NADH-ubiquinone oxidoreductase chain 3 (115 aa).

Transmembrane regions (helical) follow at residues 1–21 (MITL…LLII), 55–75 (FFLV…LFPL), and 87–107 (AIIL…YEWL).

This sequence belongs to the complex I subunit 3 family.

The protein resides in the mitochondrion membrane. The catalysed reaction is a ubiquinone + NADH + 5 H(+)(in) = a ubiquinol + NAD(+) + 4 H(+)(out). Its function is as follows. Core subunit of the mitochondrial membrane respiratory chain NADH dehydrogenase (Complex I) that is believed to belong to the minimal assembly required for catalysis. Complex I functions in the transfer of electrons from NADH to the respiratory chain. The immediate electron acceptor for the enzyme is believed to be ubiquinone. This Myxine glutinosa (Atlantic hagfish) protein is NADH-ubiquinone oxidoreductase chain 3 (MT-ND3).